Here is a 303-residue protein sequence, read N- to C-terminus: N-acetylmuramic acid 6-phosphate etherase (303 aa).

The SIS domain maps to 62-225 (IVAAFRQGGR…TTASMVLLGK (164 aa)). E90 (proton donor) is an active-site residue. E121 is an active-site residue.

It belongs to the GCKR-like family. MurNAc-6-P etherase subfamily. As to quaternary structure, homodimer.

The catalysed reaction is N-acetyl-D-muramate 6-phosphate + H2O = N-acetyl-D-glucosamine 6-phosphate + (R)-lactate. It functions in the pathway amino-sugar metabolism; 1,6-anhydro-N-acetylmuramate degradation. It participates in amino-sugar metabolism; N-acetylmuramate degradation. The protein operates within cell wall biogenesis; peptidoglycan recycling. Functionally, specifically catalyzes the cleavage of the D-lactyl ether substituent of MurNAc 6-phosphate, producing GlcNAc 6-phosphate and D-lactate. Together with AnmK, is also required for the utilization of anhydro-N-acetylmuramic acid (anhMurNAc) either imported from the medium or derived from its own cell wall murein, and thus plays a role in cell wall recycling. In Histophilus somni (strain 129Pt) (Haemophilus somnus), this protein is N-acetylmuramic acid 6-phosphate etherase.